The sequence spans 341 residues: UDP-3-O-acylglucosamine N-acyltransferase (341 aa).

His-242 serves as the catalytic Proton acceptor.

Belongs to the transferase hexapeptide repeat family. LpxD subfamily. In terms of assembly, homotrimer.

It carries out the reaction a UDP-3-O-[(3R)-3-hydroxyacyl]-alpha-D-glucosamine + a (3R)-hydroxyacyl-[ACP] = a UDP-2-N,3-O-bis[(3R)-3-hydroxyacyl]-alpha-D-glucosamine + holo-[ACP] + H(+). The protein operates within bacterial outer membrane biogenesis; LPS lipid A biosynthesis. Catalyzes the N-acylation of UDP-3-O-acylglucosamine using 3-hydroxyacyl-ACP as the acyl donor. Is involved in the biosynthesis of lipid A, a phosphorylated glycolipid that anchors the lipopolysaccharide to the outer membrane of the cell. This is UDP-3-O-acylglucosamine N-acyltransferase from Haemophilus influenzae (strain 86-028NP).